The chain runs to 463 residues: tRNA (guanine(10)-N(2))-methyltransferase TRMT11 (463 aa).

At alanine 2 the chain carries N-acetylalanine.

This sequence belongs to the class I-like SAM-binding methyltransferase superfamily. TRM11 methyltransferase family. As to quaternary structure, part of the heterodimeric TRMT11-TRM112 methyltransferase complex; this complex forms an active tRNA methyltransferase, where TRMT112 acts as an activator of the catalytic subunit TRMT11.

It is found in the cytoplasm. It catalyses the reaction guanosine(10) in tRNA + S-adenosyl-L-methionine = N(2)-methylguanosine(10) in tRNA + S-adenosyl-L-homocysteine + H(+). Functionally, catalytic subunit of the TRMT11-TRM112 methyltransferase complex, that specifically mediates the S-adenosyl-L-methionine-dependent N(2)-methylation of guanosine nucleotide at position 10 (m2G10) in tRNAs. This is one of the major tRNA (guanine-N(2))-methyltransferases. In Pongo abelii (Sumatran orangutan), this protein is tRNA (guanine(10)-N(2))-methyltransferase TRMT11.